A 142-amino-acid polypeptide reads, in one-letter code: Snaclec 2 (142 aa).

Residues 1-23 form the signal peptide; sequence MGRFIFVSFSLLVVFLSLSGTGA. A disulfide bridge links cysteine 25 with cysteine 36. The region spanning 32-139 is the C-type lectin domain; it reads YEGHCYRVFQ…CSETHNVICK (108 aa). An N-linked (GlcNAc...) asparagine glycan is attached at asparagine 43. Cystine bridges form between cysteine 53-cysteine 138 and cysteine 115-cysteine 130.

This sequence belongs to the snaclec family. Heterodimer; disulfide-linked. Expressed by the venom gland.

The protein resides in the secreted. Functionally, interferes with one step of hemostasis (modulation of platelet aggregation, or coagulation cascade, for example). The chain is Snaclec 2 from Sistrurus catenatus edwardsii (Desert massasauga).